The following is a 1058-amino-acid chain: Carbamoyl phosphate synthase large chain (1058 aa).

A carboxyphosphate synthetic domain region spans residues 1–401 (MAKRTDIKKI…CLLKACRSLE (401 aa)). Arg129, Arg169, Gly175, Gly176, Arg208, Ile210, Glu215, Gly241, Ile242, His243, Gln284, and Glu298 together coordinate ATP. One can recognise an ATP-grasp 1 domain in the interval 133 to 327 (KQLMKELGEP…IAKIAAKIAV (195 aa)). Gln284, Glu298, and Asn300 together coordinate Mg(2+). The Mn(2+) site is built by Gln284, Glu298, and Asn300. Positions 402-546 (IGVDHNELKG…YSTYEWENES (145 aa)) are oligomerization domain. A carbamoyl phosphate synthetic domain region spans residues 547–929 (IKSEKESVIV…ALYKAFEASY (383 aa)). Residues 671–861 (EKALKDLGIP…MAQVATKLIL (191 aa)) enclose the ATP-grasp 2 domain. The ATP site is built by Arg707, Ser746, Ile748, Glu752, Gly777, Val778, His779, Ser780, Gln820, and Glu832. Gln820, Glu832, and Asn834 together coordinate Mg(2+). 3 residues coordinate Mn(2+): Gln820, Glu832, and Asn834. In terms of domain architecture, MGS-like spans 930–1058 (LHMPEYGTIV…ESRTFSIEAI (129 aa)). Positions 930–1058 (LHMPEYGTIV…ESRTFSIEAI (129 aa)) are allosteric domain.

This sequence belongs to the CarB family. In terms of assembly, composed of two chains; the small (or glutamine) chain promotes the hydrolysis of glutamine to ammonia, which is used by the large (or ammonia) chain to synthesize carbamoyl phosphate. Tetramer of heterodimers (alpha,beta)4. Requires Mg(2+) as cofactor. The cofactor is Mn(2+).

It catalyses the reaction hydrogencarbonate + L-glutamine + 2 ATP + H2O = carbamoyl phosphate + L-glutamate + 2 ADP + phosphate + 2 H(+). The enzyme catalyses hydrogencarbonate + NH4(+) + 2 ATP = carbamoyl phosphate + 2 ADP + phosphate + 2 H(+). It functions in the pathway amino-acid biosynthesis; L-arginine biosynthesis; carbamoyl phosphate from bicarbonate: step 1/1. The protein operates within pyrimidine metabolism; UMP biosynthesis via de novo pathway; (S)-dihydroorotate from bicarbonate: step 1/3. Its function is as follows. Large subunit of the glutamine-dependent carbamoyl phosphate synthetase (CPSase). CPSase catalyzes the formation of carbamoyl phosphate from the ammonia moiety of glutamine, carbonate, and phosphate donated by ATP, constituting the first step of 2 biosynthetic pathways, one leading to arginine and/or urea and the other to pyrimidine nucleotides. The large subunit (synthetase) binds the substrates ammonia (free or transferred from glutamine from the small subunit), hydrogencarbonate and ATP and carries out an ATP-coupled ligase reaction, activating hydrogencarbonate by forming carboxy phosphate which reacts with ammonia to form carbamoyl phosphate. This Streptococcus equi subsp. zooepidemicus (strain H70) protein is Carbamoyl phosphate synthase large chain.